The primary structure comprises 282 residues: Tyrosine recombinase XerA (282 aa).

The Core-binding (CB) domain occupies 2–79 (EAINEVIEEY…ALRSYFRFEG (78 aa)). The region spanning 95 to 271 (SLPKSLTREE…TVEHLRKAQE (177 aa)) is the Tyr recombinase domain. Catalysis depends on residues R132, K157, H223, R226, and H249. The active-site O-(3'-phospho-DNA)-tyrosine intermediate is Y258.

The protein belongs to the 'phage' integrase family. XerA subfamily.

The protein localises to the cytoplasm. Its function is as follows. Site-specific tyrosine recombinase, which acts by catalyzing the cutting and rejoining of the recombining DNA molecules. The polypeptide is Tyrosine recombinase XerA (Thermococcus onnurineus (strain NA1)).